Here is a 545-residue protein sequence, read N- to C-terminus: CTP synthase (545 aa).

The segment at 1–266 (MATNYIFVTG…DDIVTKRFNL (266 aa)) is amidoligase domain. S14 contributes to the CTP binding site. Residue S14 participates in UTP binding. ATP-binding positions include 15-20 (SLGKGI) and D72. The Mg(2+) site is built by D72 and E140. Residues 147–149 (DIE), 187–192 (KTKPTQ), and K223 each bind CTP. UTP is bound by residues 187–192 (KTKPTQ) and K223. 239-241 (RDV) serves as a coordination point for ATP. A Glutamine amidotransferase type-1 domain is found at 291 to 542 (TVGFVGKYVE…IEAAGEFHKE (252 aa)). G352 provides a ligand contact to L-glutamine. C379 acts as the Nucleophile; for glutamine hydrolysis in catalysis. Residues 380–383 (LGMQ), E403, and R470 each bind L-glutamine. Catalysis depends on residues H515 and E517.

Belongs to the CTP synthase family. As to quaternary structure, homotetramer.

It catalyses the reaction UTP + L-glutamine + ATP + H2O = CTP + L-glutamate + ADP + phosphate + 2 H(+). It carries out the reaction L-glutamine + H2O = L-glutamate + NH4(+). The enzyme catalyses UTP + NH4(+) + ATP = CTP + ADP + phosphate + 2 H(+). It participates in pyrimidine metabolism; CTP biosynthesis via de novo pathway; CTP from UDP: step 2/2. Allosterically activated by GTP, when glutamine is the substrate; GTP has no effect on the reaction when ammonia is the substrate. The allosteric effector GTP functions by stabilizing the protein conformation that binds the tetrahedral intermediate(s) formed during glutamine hydrolysis. Inhibited by the product CTP, via allosteric rather than competitive inhibition. In terms of biological role, catalyzes the ATP-dependent amination of UTP to CTP with either L-glutamine or ammonia as the source of nitrogen. Regulates intracellular CTP levels through interactions with the four ribonucleotide triphosphates. The polypeptide is CTP synthase (Idiomarina loihiensis (strain ATCC BAA-735 / DSM 15497 / L2-TR)).